A 127-amino-acid polypeptide reads, in one-letter code: Large ribosomal subunit protein bL21c (127 aa).

The protein belongs to the bacterial ribosomal protein bL21 family. In terms of assembly, part of the 50S ribosomal subunit.

Its subcellular location is the plastid. The protein localises to the chloroplast. In terms of biological role, this protein binds to 23S rRNA. This chain is Large ribosomal subunit protein bL21c, found in Adiantum capillus-veneris (Maidenhair fern).